The chain runs to 340 residues: Mitochondrial amidoxime-reducing component 1 (340 aa).

The N-myristoyl glycine moiety is linked to residue Gly-2. At 2–24 (GAGSWALTLFGFSAFRVPGQPRS) the chain is on the mitochondrial matrix side. Residues 25-44 (TWLGVAALGLAAVALGTVAW) traverse the membrane as a helical; Signal-anchor for type II membrane protein segment. Residues 45 to 340 (RRARPRRRRR…VGDPVYLLGQ (296 aa)) lie on the Cytoplasmic side of the membrane. Lys-70, Ser-71, and Arg-95 together coordinate Mo-molybdopterin. Residues 96–186 (FWLVINEEGN…KMQSCRLVHF (91 aa)) form an MOSC N-terminal region region. Residues 191–338 (RPRSSRQMKA…IRVGDPVYLL (148 aa)) form the MOSC domain. Residues Ser-214, Arg-241, Asn-243, Thr-274, Arg-275, Cys-276, and Tyr-320 each contribute to the Mo-molybdopterin site.

As to quaternary structure, component of a complex composed of cytochrome b5, NADH-cytochrome b5 reductase and MTARC1. Mo-molybdopterin is required as a cofactor.

It localises to the mitochondrion outer membrane. It is found in the membrane. It carries out the reaction N(omega)-hydroxy-L-arginine + 2 Fe(II)-[cytochrome b5] + 2 H(+) = L-arginine + 2 Fe(III)-[cytochrome b5] + H2O. In terms of biological role, catalyzes the reduction of N-oxygenated molecules, acting as a counterpart of cytochrome P450 and flavin-containing monooxygenases in metabolic cycles. As a component of prodrug-converting system, reduces a multitude of N-hydroxylated prodrugs particularly amidoximes, leading to increased drug bioavailability. May be involved in mitochondrial N(omega)-hydroxy-L-arginine (NOHA) reduction, regulating endogenous nitric oxide levels and biosynthesis. Postulated to cleave the N-OH bond of N-hydroxylated substrates in concert with electron transfer from NADH to cytochrome b5 reductase then to cytochrome b5, the ultimate electron donor that primes the active site for substrate reduction. The chain is Mitochondrial amidoxime-reducing component 1 (Mtarc1) from Mus musculus (Mouse).